A 324-amino-acid chain; its full sequence is Protoheme IX farnesyltransferase (324 aa).

Transmembrane regions (helical) follow at residues L31–V51, F56–I76, V105–L125, S126–K146, I153–G173, V181–I201, P214–L234, L238–L258, and F285–T305.

The protein belongs to the UbiA prenyltransferase family. Protoheme IX farnesyltransferase subfamily.

The protein resides in the cell inner membrane. It carries out the reaction heme b + (2E,6E)-farnesyl diphosphate + H2O = Fe(II)-heme o + diphosphate. It functions in the pathway porphyrin-containing compound metabolism; heme O biosynthesis; heme O from protoheme: step 1/1. Functionally, converts heme B (protoheme IX) to heme O by substitution of the vinyl group on carbon 2 of heme B porphyrin ring with a hydroxyethyl farnesyl side group. This is Protoheme IX farnesyltransferase from Acaryochloris marina (strain MBIC 11017).